The chain runs to 291 residues: Malolactic fermentation system transcriptional activator (291 aa).

One can recognise an HTH lysR-type domain in the interval 1–60 (MSLNLRDLEYFYQLSKLRSFTNVAKHFRVSQPTISYAIKRLETYYDCDLFYKDSSHQVVD). Positions 20–39 (FTNVAKHFRVSQPTISYAIK) form a DNA-binding region, H-T-H motif.

Belongs to the LysR transcriptional regulatory family.

It is found in the cytoplasm. Functionally, required for malolactic fermentation. It is most probably a transcriptional activator. The polypeptide is Malolactic fermentation system transcriptional activator (mleR) (Lactococcus lactis subsp. lactis (strain IL1403) (Streptococcus lactis)).